Reading from the N-terminus, the 155-residue chain is Zinc finger HIT domain-containing protein 3 (155 aa).

The Zn(2+) site is built by Cys-11, Cys-14, Cys-22, Cys-25, Cys-30, Cys-34, His-38, and Cys-42. The HIT-type zinc finger occupies 11-42 (CVICLEKPKYRCPACRVPYCSVVCFRKHKEQC). Ser-80 bears the Phosphoserine mark.

Thyroid receptor interacting proteins (TRIPs) specifically interact with the ligand binding domain of the thyroid receptor (TR). Requires the presence of thyroid hormone for its interaction. Interacts with NUFIP1. Interacts (via HIT-type zinc finger) with the RUVBL1/RUVBL2 complex in the presence of ADP.

Its subcellular location is the cytoplasm. It is found in the nucleus. This Homo sapiens (Human) protein is Zinc finger HIT domain-containing protein 3 (ZNHIT3).